Consider the following 232-residue polypeptide: Cytidylate kinase (232 aa).

Position 19-27 (19-27 (GPAGVGKTT)) interacts with ATP.

The protein belongs to the cytidylate kinase family. Type 1 subfamily.

It is found in the cytoplasm. The enzyme catalyses CMP + ATP = CDP + ADP. The catalysed reaction is dCMP + ATP = dCDP + ADP. The protein is Cytidylate kinase of Nitratidesulfovibrio vulgaris (strain DP4) (Desulfovibrio vulgaris).